The chain runs to 1021 residues: Translation initiation factor IF-2 (1021 aa).

Residues 50-422 (AFPAEGGSAS…RMGAMVPRGN (373 aa)) form a disordered region. Over residues 57–71 (SASGGRPGGRPGPGN) the composition is skewed to gly residues. Pro residues predominate over residues 75 to 95 (PAPPRPGLAPRPGPRPVPGRP). Residues 96-112 (GPAARPGGPAAPSAPAA) show a composition bias toward low complexity. Residues 113 to 129 (PSAPAPGAPAASPPASQ) show a composition bias toward pro residues. Low complexity-rich tracts occupy residues 130 to 159 (PRPI…ASGP), 167 to 178 (GGPAAPGRARPG), and 187 to 196 (SAPSAPSAGG). Positions 198 to 208 (RPGPRPGPRPS) are enriched in pro residues. The segment covering 219-233 (SAGPRQSAGQSGSGP) has biased composition (low complexity). 2 stretches are compositionally biased toward pro residues: residues 234-254 (ASPP…PRPG) and 262-273 (RPSPGSMPPRPG). 2 stretches are compositionally biased toward gly residues: residues 275-291 (RPGG…GSGG) and 306-389 (GAPG…GGRG). Residues 390-401 (RPGRQRKSKRAK) are compositionally biased toward basic residues. In terms of domain architecture, tr-type G spans 514–686 (IRPPVVTVMG…IILTADASLD (173 aa)). The segment at 523–530 (GHVDHGKT) is G1. Position 523–530 (523–530 (GHVDHGKT)) interacts with GTP. The G2 stretch occupies residues 548–552 (GITQH). The interval 573–576 (DTPG) is G3. GTP is bound by residues 573–577 (DTPGH) and 627–630 (NKVD). The G4 stretch occupies residues 627 to 630 (NKVD). A G5 region spans residues 663-665 (SAR).

This sequence belongs to the TRAFAC class translation factor GTPase superfamily. Classic translation factor GTPase family. IF-2 subfamily.

It localises to the cytoplasm. Functionally, one of the essential components for the initiation of protein synthesis. Protects formylmethionyl-tRNA from spontaneous hydrolysis and promotes its binding to the 30S ribosomal subunits. Also involved in the hydrolysis of GTP during the formation of the 70S ribosomal complex. The sequence is that of Translation initiation factor IF-2 from Frankia alni (strain DSM 45986 / CECT 9034 / ACN14a).